The chain runs to 442 residues: GTPase Der (442 aa).

EngA-type G domains follow at residues 4-169 and 178-353; these read PIVA…PENN and IKIA…EQAT. Residues 10 to 17, 57 to 61, 121 to 124, 184 to 191, 231 to 235, and 296 to 299 contribute to the GTP site; these read GRPNVGKS, DTGGL, NKIE, DTAGM, and NKWD. The 85-residue stretch at 354–438 folds into the KH-like domain; it reads RRISTSVLNE…PMRFFIRERE (85 aa).

Belongs to the TRAFAC class TrmE-Era-EngA-EngB-Septin-like GTPase superfamily. EngA (Der) GTPase family. As to quaternary structure, associates with the 50S ribosomal subunit.

Functionally, GTPase that plays an essential role in the late steps of ribosome biogenesis. This is GTPase Der from Heliobacterium modesticaldum (strain ATCC 51547 / Ice1).